Here is a 150-residue protein sequence, read N- to C-terminus: Large ribosomal subunit protein bL9 (150 aa).

The protein belongs to the bacterial ribosomal protein bL9 family.

Functionally, binds to the 23S rRNA. This is Large ribosomal subunit protein bL9 from Paraburkholderia xenovorans (strain LB400).